A 364-amino-acid chain; its full sequence is Aminomethyltransferase (364 aa).

It belongs to the GcvT family. In terms of assembly, the glycine cleavage system is composed of four proteins: P, T, L and H.

It carries out the reaction N(6)-[(R)-S(8)-aminomethyldihydrolipoyl]-L-lysyl-[protein] + (6S)-5,6,7,8-tetrahydrofolate = N(6)-[(R)-dihydrolipoyl]-L-lysyl-[protein] + (6R)-5,10-methylene-5,6,7,8-tetrahydrofolate + NH4(+). Its function is as follows. The glycine cleavage system catalyzes the degradation of glycine. This is Aminomethyltransferase from Geobacillus kaustophilus (strain HTA426).